A 262-amino-acid polypeptide reads, in one-letter code: tRNA (guanine-N(1)-)-methyltransferase (262 aa).

Residues Gly-113 and 137–142 contribute to the S-adenosyl-L-methionine site; that span reads IGDYVL.

This sequence belongs to the RNA methyltransferase TrmD family. As to quaternary structure, homodimer.

The protein resides in the cytoplasm. The enzyme catalyses guanosine(37) in tRNA + S-adenosyl-L-methionine = N(1)-methylguanosine(37) in tRNA + S-adenosyl-L-homocysteine + H(+). Functionally, specifically methylates guanosine-37 in various tRNAs. In Thermobifida fusca (strain YX), this protein is tRNA (guanine-N(1)-)-methyltransferase.